A 408-amino-acid chain; its full sequence is MTSHTLNELIAEGVRGRYILVRSDLNVPLDGSTVTDDGRIKASLPVLAKLTDAGARVLVTAHLGRPKGAPEDKYSLRPAVDRLAELAGFKVTLAADTVGDSAREAAASLQDGEALVLENVRFDARETSKDDAERGAFADELVALTGANGAYVDDAFGAVHRKHASVYDVASRLPSYQGDLVHTEVEVLRKLTADTQRPYVVVLGGSKVSDKLAVIDNLIGKADTILVGGGMLFTFLAAAGHKVAASLLEQDQIGVVQDYLKRAADAGTEFVIPTDVVVAEKFAADAAHETVAADAIEASSFGANGIGLDIGPDSAAAFADRIKGARTVFWNGPMGVFEFEAFSAGTRAIAQALTETEAFTVVGGGDSAAAVRTLGFADDQFGHISTGGGASLEYLEGKELPGLSILDR.

Substrate is bound by residues Asp-24–Asn-26, Arg-39, His-62–Arg-65, Arg-121, and Arg-161. Residues Lys-211, Gly-307, Glu-338, and Gly-364–Ser-367 each bind ATP.

It belongs to the phosphoglycerate kinase family. In terms of assembly, monomer.

It localises to the cytoplasm. The catalysed reaction is (2R)-3-phosphoglycerate + ATP = (2R)-3-phospho-glyceroyl phosphate + ADP. It functions in the pathway carbohydrate degradation; glycolysis; pyruvate from D-glyceraldehyde 3-phosphate: step 2/5. In Pseudarthrobacter chlorophenolicus (strain ATCC 700700 / DSM 12829 / CIP 107037 / JCM 12360 / KCTC 9906 / NCIMB 13794 / A6) (Arthrobacter chlorophenolicus), this protein is Phosphoglycerate kinase.